The primary structure comprises 305 residues: tRNA dimethylallyltransferase (305 aa).

ATP is bound at residue 8 to 15 (GPTASGKT). 10–15 (TASGKT) contacts substrate. An interaction with substrate tRNA region spans residues 33–36 (DSQQ).

It belongs to the IPP transferase family. In terms of assembly, monomer. The cofactor is Mg(2+).

It catalyses the reaction adenosine(37) in tRNA + dimethylallyl diphosphate = N(6)-dimethylallyladenosine(37) in tRNA + diphosphate. Functionally, catalyzes the transfer of a dimethylallyl group onto the adenine at position 37 in tRNAs that read codons beginning with uridine, leading to the formation of N6-(dimethylallyl)adenosine (i(6)A). This Anaeromyxobacter dehalogenans (strain 2CP-1 / ATCC BAA-258) protein is tRNA dimethylallyltransferase.